Consider the following 237-residue polypeptide: Phosphoribosylaminoimidazole-succinocarboxamide synthase (237 aa).

It belongs to the SAICAR synthetase family.

The enzyme catalyses 5-amino-1-(5-phospho-D-ribosyl)imidazole-4-carboxylate + L-aspartate + ATP = (2S)-2-[5-amino-1-(5-phospho-beta-D-ribosyl)imidazole-4-carboxamido]succinate + ADP + phosphate + 2 H(+). The protein operates within purine metabolism; IMP biosynthesis via de novo pathway; 5-amino-1-(5-phospho-D-ribosyl)imidazole-4-carboxamide from 5-amino-1-(5-phospho-D-ribosyl)imidazole-4-carboxylate: step 1/2. The sequence is that of Phosphoribosylaminoimidazole-succinocarboxamide synthase from Pseudomonas fluorescens (strain ATCC BAA-477 / NRRL B-23932 / Pf-5).